The following is a 306-amino-acid chain: MSTLGHQYDNSLVSNAFGFLRLPMNFQPYDSDADWVITGVPFDMATSGRAGGRHGPAAIRQVSTNLAWEHNRFPWNFDMRERLNVVDCGDLVYAFGDAREMSEKLQAHAEKLLAAGKRMLSFGGDHFVTLPLLRAHAKHFGKMALVHFDAHTDTYANGCEFDHGTMFYTAPKEGLIDPNHSVQIGIRTEFDIDNGFTVLDACQVNDRSVDDVIAQVKQIVGDMPVYLTFDIDCLDPAFAPGTGTPVIGGLTSDRAIKLVRGLKDLNIVGMDVVEVAPAYDQSEITALAAATLALEMLYIQAAKKGE.

Positions 126, 149, 151, 153, 230, and 232 each coordinate Mn(2+).

This sequence belongs to the arginase family. Agmatinase subfamily. Mn(2+) is required as a cofactor.

The catalysed reaction is agmatine + H2O = urea + putrescine. The protein operates within amine and polyamine biosynthesis; putrescine biosynthesis via agmatine pathway; putrescine from agmatine: step 1/1. Its function is as follows. Catalyzes the formation of putrescine from agmatine. The protein is Agmatinase of Escherichia coli (strain SE11).